Reading from the N-terminus, the 142-residue chain is Large ribosomal subunit protein uL13 (142 aa).

This sequence belongs to the universal ribosomal protein uL13 family. In terms of assembly, part of the 50S ribosomal subunit.

Its function is as follows. This protein is one of the early assembly proteins of the 50S ribosomal subunit, although it is not seen to bind rRNA by itself. It is important during the early stages of 50S assembly. The polypeptide is Large ribosomal subunit protein uL13 (Sodalis glossinidius (strain morsitans)).